The primary structure comprises 751 residues: Photosystem I P700 chlorophyll a apoprotein A1 (751 aa).

8 helical membrane-spanning segments follow: residues 72-95 (IFSA…FHGA), 158-181 (LYCT…FHYH), 197-221 (MNHH…HVSL), 293-311 (TAHH…GHMY), 348-371 (WHAQ…HHMY), 387-413 (LSLF…IFMV), 435-457 (AIIS…LYVH), and 532-550 (FLVH…LILL). Residues Cys574 and Cys583 each contribute to the [4Fe-4S] cluster site. 2 helical membrane-spanning segments follow: residues 590–611 (HVFL…HFSW) and 665–687 (LSAY…MFLF). His676 contributes to the chlorophyll a' binding site. Residues Met684 and Tyr692 each contribute to the chlorophyll a site. Residue Trp693 participates in phylloquinone binding. The helical transmembrane segment at 725–745 (AVGVTHYLLGGIVTTWAFFLA) threads the bilayer.

Belongs to the PsaA/PsaB family. In terms of assembly, the PsaA/B heterodimer binds the P700 chlorophyll special pair and subsequent electron acceptors. PSI consists of a core antenna complex that captures photons, and an electron transfer chain that converts photonic excitation into a charge separation. The cyanobacterial PSI reaction center is composed of one copy each of PsaA,B,C,D,E,F,I,J,K,L,M and X, and forms trimeric complexes. PSI electron transfer chain: 5 chlorophyll a, 1 chlorophyll a', 2 phylloquinones and 3 4Fe-4S clusters. PSI core antenna: 90 chlorophyll a, 22 carotenoids, 3 phospholipids and 1 galactolipid. P700 is a chlorophyll a/chlorophyll a' dimer, A0 is one or more chlorophyll a, A1 is one or both phylloquinones and FX is a shared 4Fe-4S iron-sulfur center. is required as a cofactor.

It localises to the cellular thylakoid membrane. It carries out the reaction reduced [plastocyanin] + hnu + oxidized [2Fe-2S]-[ferredoxin] = oxidized [plastocyanin] + reduced [2Fe-2S]-[ferredoxin]. In terms of biological role, psaA and PsaB bind P700, the primary electron donor of photosystem I (PSI), as well as the electron acceptors A0, A1 and FX. PSI is a plastocyanin/cytochrome c6-ferredoxin oxidoreductase, converting photonic excitation into a charge separation, which transfers an electron from the donor P700 chlorophyll pair to the spectroscopically characterized acceptors A0, A1, FX, FA and FB in turn. Oxidized P700 is reduced on the lumenal side of the thylakoid membrane by plastocyanin or cytochrome c6. The polypeptide is Photosystem I P700 chlorophyll a apoprotein A1 (Gloeothece citriformis (strain PCC 7424) (Cyanothece sp. (strain PCC 7424))).